Reading from the N-terminus, the 493-residue chain is Probable vesicular acetylcholine transporter-B (493 aa).

The Cytoplasmic segment spans residues 1-39 (MQSTGAPGLAQSAVLQLSAMGERSRELGGALREPERKRR). The chain crosses the membrane as a helical span at residues 40-60 (LLLVVVCVALLLDNMLYMVIV). Topologically, residues 61–86 (PIIPDYLADLRGERGNSSADLDIQIG) are lumenal, vesicle. N-linked (GlcNAc...) asparagine glycosylation occurs at Asn-76. A helical transmembrane segment spans residues 87–107 (VLFASKALLQLLVNPLSGTFI). The Cytoplasmic portion of the chain corresponds to 108–113 (DRVGYD). Residues 114-134 (LPLLIGLLVMFLSTCIFAFAE) form a helical membrane-spanning segment. Residues 135 to 143 (NYGTLFAAR) lie on the Lumenal, vesicle side of the membrane. The helical transmembrane segment at 144–164 (SLQGLGSAFADTSGIAMIADK) threads the bilayer. Residues 165–174 (FTEEAERSRA) are Cytoplasmic-facing. The helical transmembrane segment at 175 to 195 (LGIALAFISFGSLVAPPFGGI) threads the bilayer. Residues 196-203 (LYEFAGKR) lie on the Lumenal, vesicle side of the membrane. A helical transmembrane segment spans residues 204 to 224 (VPFIVLACVCLADGVLLLTVV). Residues 225-247 (KPFSDRTRENMPVGTPIHRLMVD) lie on the Cytoplasmic side of the membrane. A helical membrane pass occupies residues 248-268 (PYIAVVAGALTVCNIPLAFLE). The Lumenal, vesicle segment spans residues 269–284 (PTIANWMESTMDASKW). A helical membrane pass occupies residues 285–305 (QMGLVWLPAFLPHVLGVYITV). At 306–315 (RLAARYPERQ) the chain is on the cytoplasmic side. Residues 316–336 (WFYGALGMVIIGASSCTVPAC) traverse the membrane as a helical segment. Residues 337–347 (KTFGELVFPLC) are Lumenal, vesicle-facing. A helical transmembrane segment spans residues 348–368 (GICFGIALVDTALLPTLAFLV). The Cytoplasmic portion of the chain corresponds to 369–378 (DVRHVSVYGS). Residues 379–399 (VYAIADISYSVAYAMGPVVAG) form a helical membrane-spanning segment. Residues 400–406 (QIVHNLG) lie on the Lumenal, vesicle side of the membrane. The helical transmembrane segment at 407-427 (FVQLNLGMGLVNVLYAPALLL) threads the bilayer. Topologically, residues 428-493 (LRPVCQIKPS…EEEESGPESA (66 aa)) are cytoplasmic. Residues 467-493 (GLSAGAGTEHGLRGRSEEEEESGPESA) form a disordered region. Acidic residues predominate over residues 483 to 493 (EEEEESGPESA).

This sequence belongs to the major facilitator superfamily. Vesicular transporter family.

The protein resides in the membrane. Involved in acetylcholine transport into synaptic vesicles. This chain is Probable vesicular acetylcholine transporter-B (slc18a3b), found in Danio rerio (Zebrafish).